The sequence spans 221 residues: Ribosomal RNA small subunit methyltransferase G (221 aa).

S-adenosyl-L-methionine is bound by residues glycine 90, leucine 95, 141–142 (VE), and arginine 154.

This sequence belongs to the methyltransferase superfamily. RNA methyltransferase RsmG family.

It is found in the cytoplasm. It catalyses the reaction guanosine(527) in 16S rRNA + S-adenosyl-L-methionine = N(7)-methylguanosine(527) in 16S rRNA + S-adenosyl-L-homocysteine. In terms of biological role, specifically methylates the N7 position of guanine in position 527 of 16S rRNA. The sequence is that of Ribosomal RNA small subunit methyltransferase G from Polaromonas naphthalenivorans (strain CJ2).